The chain runs to 367 residues: ELAV-like protein 3 (367 aa).

RRM domains follow at residues 39–117 (TNLI…YARP), 125–205 (ANLY…FANN), and 284–362 (WCIF…FKTS).

Belongs to the RRM elav family. In terms of assembly, interacts with MAP1B light chain LC1. In terms of tissue distribution, brain specific. Expressed in the hippocampus with expression in CA1, CA3 and dentate gyrus.

In terms of biological role, RNA-binding protein that binds to AU-rich element (ARE) sequences of target mRNAs, including VEGF mRNA. May also bind poly-A tracts via RRM 3. May be involved in neuronal differentiation and maintenance. Plays a role in the stabilization of GAP43 mRNA and in spatial learning. The protein is ELAV-like protein 3 (Elavl3) of Mus musculus (Mouse).